Consider the following 242-residue polypeptide: ATP synthase subunit a (242 aa).

Helical transmembrane passes span 29 to 49 (SSIY…LAFY), 84 to 104 (FIPL…LGMT), 114 to 134 (IIVT…VGFV), 140 to 160 (FLTL…MIVI), 189 to 209 (VIAG…IPLM), and 210 to 230 (MILI…FTIL).

It belongs to the ATPase A chain family. F-type ATPases have 2 components, CF(1) - the catalytic core - and CF(0) - the membrane proton channel. CF(1) has five subunits: alpha(3), beta(3), gamma(1), delta(1), epsilon(1). CF(0) has three main subunits: a(1), b(2) and c(9-12). The alpha and beta chains form an alternating ring which encloses part of the gamma chain. CF(1) is attached to CF(0) by a central stalk formed by the gamma and epsilon chains, while a peripheral stalk is formed by the delta and b chains.

It is found in the cell inner membrane. Key component of the proton channel; it plays a direct role in the translocation of protons across the membrane. This Rickettsia massiliae (strain Mtu5) protein is ATP synthase subunit a.